A 524-amino-acid polypeptide reads, in one-letter code: Probable plastidic glucose transporter 1 (524 aa).

The next 12 membrane-spanning stretches (helical) occupy residues 88-108 (MANFLFGYHIGVMNGPIVSIA), 122-142 (LVVSIFIAGAFIGSIVAGPLV), 151-171 (FQIFTIPLILGALVSAQAHSL), 179-199 (FLVGLGIGVNTVLVPIYISEV), 208-228 (LGTLCQIGTCLGIIFSLLLGI), 239-259 (TMLYVASMPGFLLALGMQFAV), 320-340 (VAFIGGSLFVLQQFAGINGVL), 357-377 (QASLYVGVTNFAGALCASYLI), 386-406 (LIGSYLGMAVSMFLIVYAVGF), 420-440 (GTLMYIFSFAIGAGPVTGLII), 452-472 (IMGFSFSVHWVSNFLVGLFFL), and 483-503 (VYASFGSVSLLAAAFSHLFTV).

It belongs to the major facilitator superfamily. Sugar transporter (TC 2.A.1.1) family.

Its subcellular location is the plastid. The protein localises to the chloroplast membrane. Its function is as follows. May be involved in the efflux of glucose towards the cytosol. In Arabidopsis thaliana (Mouse-ear cress), this protein is Probable plastidic glucose transporter 1.